Here is a 689-residue protein sequence, read N- to C-terminus: Quinidine resistance protein 3 (689 aa).

Over residues 1–24 (MQAQGSQSNVGSLRSNCSDNSLPN) the composition is skewed to polar residues. The segment at 1–73 (MQAQGSQSNV…DNQLSRLKSE (73 aa)) is disordered. Residues 1 to 108 (MQAQGSQSNV…RDYPPMMKKM (108 aa)) lie on the Extracellular side of the membrane. Composition is skewed to basic and acidic residues over residues 29-51 (MHCDESSGSPHSEHNDYSYEKTN) and 59-73 (SREHRDNQLSRLKSE). Residues 109-131 (IVFLIAFSSMMGPMGTSIIFPAI) form a helical membrane-spanning segment. Residues 132–139 (NSITTEFK) are Cytoplasmic-facing. The chain crosses the membrane as a helical span at residues 140-163 (TSVIMVNVSIGVYLLSLGVFPLWW). Residues 164–175 (SSLSELEGRRTT) are Extracellular-facing. A helical transmembrane segment spans residues 176-193 (YITSFALLFAFNIGSALA). Topologically, residues 194–235 (PDINSFIALRMLCGAASASVQSVGAGTVADLYISEDRGKNLS) are cytoplasmic. Residues 236–256 (YYYLGPLLAPLLSPIFGSLLV) form a helical membrane-spanning segment. At 257–265 (NRWPWRSTQ) the chain is on the extracellular side. The helical transmembrane segment at 266 to 283 (WFMVILSGCNVILLTVLL) threads the bilayer. Over 284–475 (PETLRKQDSK…KSLHFLEYPP (192 aa)) the chain is Cytoplasmic. Position 436 is a phosphoserine (serine 436). Residues 476–493 (VALAITFSAISFSTVYFV) traverse the membrane as a helical segment. Topologically, residues 494–510 (NMTVEYKYSRPPYNFKP) are extracellular. Residues 511-532 (LYIGLLYIPNSVTYFFASIYGG) traverse the membrane as a helical segment. Over 533–558 (RWVDMLLKRYKEKYGILAPEARISWN) the chain is Cytoplasmic. The helical transmembrane segment at 559-577 (VVTSVISFPIALLIFGWCL) threads the bilayer. The Extracellular portion of the chain corresponds to 578–586 (DKKCHWVTP). Residues 587-609 (LIGTALFGYAAMMTIGATLSYLV) form a helical membrane-spanning segment. The Cytoplasmic segment spans residues 610-624 (DSLPGKGATGVALNN). Residues 625 to 642 (LIRQILAATAVFVTTPML) traverse the membrane as a helical segment. Topologically, residues 643-648 (NGMGTG) are extracellular. A helical membrane pass occupies residues 649–668 (WAFTMLAFIVLGASSVLIIL). The Cytoplasmic portion of the chain corresponds to 669–689 (KKHGDYWRENYDLQKLYDKID).

It belongs to the major facilitator superfamily. CAR1 family.

It localises to the cell membrane. Multidrug resistance transporter involved in resistance and adaptation to quinidine and to the herbicide barban (4-chloro-2-butynyl [3-chlorophenyl] carbamate). This Saccharomyces cerevisiae (strain ATCC 204508 / S288c) (Baker's yeast) protein is Quinidine resistance protein 3 (QDR3).